We begin with the raw amino-acid sequence, 1140 residues long: Eukaryotic translation initiation factor 3 subunit A (1140 aa).

The PCI domain occupies 319 to 501 (LQRMAAHVLL…NSIYFGTDLT (183 aa)). Basic and acidic residues-rich tracts occupy residues 588–623 (QNNA…EERE) and 829–899 (AAEE…RGGD). 2 disordered regions span residues 588 to 630 (QNNA…HQNE) and 829 to 1140 (AAEE…VKRR). Ser908 carries the post-translational modification Phosphoserine. Basic and acidic residues-rich tracts occupy residues 920–976 (ERND…EPDS), 990–1051 (SRDD…EPQR), 1059–1086 (DAPR…RGDQ), and 1109–1130 (TREE…KAGD).

Belongs to the eIF-3 subunit A family. Component of the eukaryotic translation initiation factor 3 (eIF-3) complex. The eIF-3 complex interacts with pix.

The protein resides in the cytoplasm. RNA-binding component of the eukaryotic translation initiation factor 3 (eIF-3) complex, which is involved in protein synthesis of a specialized repertoire of mRNAs and, together with other initiation factors, stimulates binding of mRNA and methionyl-tRNAi to the 40S ribosome. The eIF-3 complex specifically targets and initiates translation of a subset of mRNAs involved in cell proliferation. The polypeptide is Eukaryotic translation initiation factor 3 subunit A (Drosophila melanogaster (Fruit fly)).